The primary structure comprises 322 residues: Quinolinate synthase (322 aa).

Histidine 37 and serine 54 together coordinate iminosuccinate. Residue cysteine 99 participates in [4Fe-4S] cluster binding. Residues 125–127 (YIN) and serine 142 contribute to the iminosuccinate site. Cysteine 185 provides a ligand contact to [4Fe-4S] cluster. Iminosuccinate-binding positions include 211-213 (HPE) and threonine 228. Residue cysteine 278 coordinates [4Fe-4S] cluster.

Belongs to the quinolinate synthase family. Type 2 subfamily. The cofactor is [4Fe-4S] cluster.

The protein resides in the cytoplasm. It carries out the reaction iminosuccinate + dihydroxyacetone phosphate = quinolinate + phosphate + 2 H2O + H(+). The protein operates within cofactor biosynthesis; NAD(+) biosynthesis; quinolinate from iminoaspartate: step 1/1. Functionally, catalyzes the condensation of iminoaspartate with dihydroxyacetone phosphate to form quinolinate. In Prosthecochloris aestuarii (strain DSM 271 / SK 413), this protein is Quinolinate synthase.